We begin with the raw amino-acid sequence, 141 residues long: Nucleoside diphosphate kinase (141 aa).

ATP is bound by residues K11, F59, R87, T93, R104, and N114. Residue H117 is the Pros-phosphohistidine intermediate of the active site.

Belongs to the NDK family. Homotetramer. It depends on Mg(2+) as a cofactor.

The protein localises to the cytoplasm. It carries out the reaction a 2'-deoxyribonucleoside 5'-diphosphate + ATP = a 2'-deoxyribonucleoside 5'-triphosphate + ADP. It catalyses the reaction a ribonucleoside 5'-diphosphate + ATP = a ribonucleoside 5'-triphosphate + ADP. Functionally, major role in the synthesis of nucleoside triphosphates other than ATP. The ATP gamma phosphate is transferred to the NDP beta phosphate via a ping-pong mechanism, using a phosphorylated active-site intermediate. The polypeptide is Nucleoside diphosphate kinase (Pseudomonas syringae pv. tomato (strain ATCC BAA-871 / DC3000)).